Here is a 107-residue protein sequence, read N- to C-terminus: Defensin-like protein 242 (107 aa).

Residues 1-22 form the signal peptide; it reads MKVVAIFLASCVLFSLIPTHLS. Disulfide bonds link C45–C100, C55–C84, C65–C94, and C82–C96.

It belongs to the DEFL family.

The protein localises to the secreted. The chain is Defensin-like protein 242 (SCRL10) from Arabidopsis thaliana (Mouse-ear cress).